The primary structure comprises 156 residues: ATP synthase subunit b (156 aa).

The helical transmembrane segment at 7–29 threads the bilayer; the sequence is LFAQMVVFLVLAWFTMKFVWPPL.

It belongs to the ATPase B chain family. F-type ATPases have 2 components, F(1) - the catalytic core - and F(0) - the membrane proton channel. F(1) has five subunits: alpha(3), beta(3), gamma(1), delta(1), epsilon(1). F(0) has three main subunits: a(1), b(2) and c(10-14). The alpha and beta chains form an alternating ring which encloses part of the gamma chain. F(1) is attached to F(0) by a central stalk formed by the gamma and epsilon chains, while a peripheral stalk is formed by the delta and b chains.

It localises to the cell inner membrane. Its function is as follows. F(1)F(0) ATP synthase produces ATP from ADP in the presence of a proton or sodium gradient. F-type ATPases consist of two structural domains, F(1) containing the extramembraneous catalytic core and F(0) containing the membrane proton channel, linked together by a central stalk and a peripheral stalk. During catalysis, ATP synthesis in the catalytic domain of F(1) is coupled via a rotary mechanism of the central stalk subunits to proton translocation. Functionally, component of the F(0) channel, it forms part of the peripheral stalk, linking F(1) to F(0). This Burkholderia pseudomallei (strain 668) protein is ATP synthase subunit b.